We begin with the raw amino-acid sequence, 138 residues long: MRTLWIVAVLLLGVEGSLVQFEMMIMEVAKRSGLLWYSAYGCYCGWGGHGRPQDATDRCCFVHDCCYGKATDCNPKRVSYTYSEENGEIVCGGDDPCGTQICECDKAAAICFRDNIPSYDNKYWLFPPKNCQEEPEPC.

The N-terminal stretch at 1-16 is a signal peptide; that stretch reads MRTLWIVAVLLLGVEG. Disulfide bonds link C42/C131, C44/C60, C59/C111, C65/C138, C66/C104, C73/C97, and C91/C102. Ca(2+)-binding residues include Y43, G45, and G47. The active site involves H63. D64 is a binding site for Ca(2+). The active site involves D105.

The protein belongs to the phospholipase A2 family. Group II subfamily. D49 sub-subfamily. Ca(2+) is required as a cofactor. Expressed by the venom gland.

It localises to the secreted. The enzyme catalyses a 1,2-diacyl-sn-glycero-3-phosphocholine + H2O = a 1-acyl-sn-glycero-3-phosphocholine + a fatty acid + H(+). In terms of biological role, snake venom phospholipase A2 (PLA2) that shows high lipolytic and weak ADP-induced platelet aggregation activities. Also shows weak anticoagulant activity. PLA2 catalyzes the calcium-dependent hydrolysis of the 2-acyl groups in 3-sn-phosphoglycerides. The polypeptide is Acidic phospholipase A2 CH-E6' (Crotalus horridus (Timber rattlesnake)).